A 335-amino-acid polypeptide reads, in one-letter code: MEEKIKFYFEIIDFQNQKFKIQEFTSKLIGLKEESFTTFKPIVYEKYLNWTQSIEESILKTNGTINKSIFEEIFSYCGYIGEFLEYEPFIVFLKFTTFGIILDDYIFEKINSLNMKLNEKEKLINSLIYYNNKNENKIGFEFWEIINEFQNFTHKESFQRIINANSLWIKSSIDSRNISNSPINSRCSFNEYFEKRSSDASGDFILTISMIGIMDNYIENSIIESKEFQTINYHAKSFFLLINDLYSFNREINENDLLNYIKILAIQLNSIQLSIDKTIELIIDHYLKFLSSIETILKLYQNDQSTYQLLKQVFQNSNKILSGIYFAHKKSKRYN.

The DDxx(x)D/E motif motif lies at 103 to 108 (DDYIFE). An NDxxSxxxD/E motif motif is present at residues 243–251 (NDLYSFNRE).

The protein belongs to the terpene synthase family.

The catalysed reaction is (2E,6E)-farnesyl diphosphate + H2O = (6E)-nerolidol + diphosphate. Terpene synthase that converts its substrate farnesyl diphosphate (FPP) into the sesquiterpene (E)-nerolidol. The sequence is that of Terpene synthase 4 from Dictyostelium discoideum (Social amoeba).